The following is a 694-amino-acid chain: Methionine--tRNA ligase (694 aa).

A 'HIGH' region motif is present at residues 12 to 22; that stretch reads PYANGPLHLGH. Residues Cys-143, Cys-146, Cys-156, and Cys-159 each coordinate Zn(2+). A 'KMSKS' region motif is present at residues 330-334; it reads KMSKS. ATP is bound at residue Lys-333. A disordered region spans residues 552-577; sequence APAAPAATTKPAPSKADAAPAAVANP. Residues 591–694 form the tRNA-binding domain; the sequence is DFAKLDLRIG…AGAQPGMPVR (104 aa).

Belongs to the class-I aminoacyl-tRNA synthetase family. MetG type 1 subfamily. In terms of assembly, homodimer. Zn(2+) serves as cofactor.

It is found in the cytoplasm. It carries out the reaction tRNA(Met) + L-methionine + ATP = L-methionyl-tRNA(Met) + AMP + diphosphate. Is required not only for elongation of protein synthesis but also for the initiation of all mRNA translation through initiator tRNA(fMet) aminoacylation. This is Methionine--tRNA ligase from Xanthomonas campestris pv. campestris (strain B100).